The following is a 263-amino-acid chain: Ribosomal RNA large subunit methyltransferase E (263 aa).

S-adenosyl-L-methionine-binding residues include Gly-50, Trp-52, Asp-68, Asn-84, and Asp-109. Lys-149 (proton acceptor) is an active-site residue. The region spanning 196–254 is the TRAM domain; sequence PLRKGDKFVVDIEKLGSSGDGAVLIEGFVVFVKEVEVGEKVRIKITDVKPNFAFADVAE.

This sequence belongs to the class I-like SAM-binding methyltransferase superfamily. RNA methyltransferase RlmE family.

Its subcellular location is the cytoplasm. The catalysed reaction is uridine(2552) in 23S rRNA + S-adenosyl-L-methionine = 2'-O-methyluridine(2552) in 23S rRNA + S-adenosyl-L-homocysteine + H(+). Specifically methylates the uridine in position 2552 of 23S rRNA at the 2'-O position of the ribose in the fully assembled 50S ribosomal subunit. The protein is Ribosomal RNA large subunit methyltransferase E of Methanosarcina barkeri (strain Fusaro / DSM 804).